The following is a 249-amino-acid chain: Probable transcriptional regulatory protein Psyc_0938 (249 aa).

The protein belongs to the TACO1 family.

Its subcellular location is the cytoplasm. The sequence is that of Probable transcriptional regulatory protein Psyc_0938 from Psychrobacter arcticus (strain DSM 17307 / VKM B-2377 / 273-4).